The primary structure comprises 67 residues: Conotoxin TxMMSK-01 (67 aa).

Residues 1 to 20 (MMSKLGVLLITCLLLFPLTA) form the signal peptide. A propeptide spanning residues 21-53 (VPLDGDQPADQPAERLQDDISSENHPFFDPVKR) is cleaved from the precursor. Intrachain disulfides connect Cys54–Cys66, Cys55–Cys62, and Cys59–Cys65. The residue at position 64 (Pro64) is a 4-hydroxyproline. Cysteine amide is present on Cys66.

Belongs to the conotoxin M superfamily. In terms of tissue distribution, expressed by the venom duct.

Its subcellular location is the secreted. The protein is Conotoxin TxMMSK-01 of Conus textile (Cloth-of-gold cone).